Here is a 222-residue protein sequence, read N- to C-terminus: MEFLTHSLLPLHEVCALQQRLSAPNLPWRDGRLTAGDQAALVKKNYQLDPNAELSLAISNCISTALTSDPLVKSFSLVRKVHSLLVSRSSAGESYGWHVDNPFSRNGRRDLSFTCFLSDEDSYEGGSLMIQTGGEDTKEFRLPPGQVVLYPSSTLHCVTPVLSGDRYVCVGWIESYVKAADDRSMLFNIDAGARGLLARHGRSDELDLIFQSYTNAVRRLSS.

The Fe2OG dioxygenase domain maps to 80-175 (KVHSLLVSRS…RYVCVGWIES (96 aa)). Residues His98, Asp100, and His156 each contribute to the Fe cation site. Arg166 contributes to the 2-oxoglutarate binding site.

Fe(2+) serves as cofactor. Requires L-ascorbate as cofactor.

This chain is PKHD-type hydroxylase Syncc9605_1577, found in Synechococcus sp. (strain CC9605).